Consider the following 186-residue polypeptide: Casparian strip membrane protein 1 (186 aa).

At 1 to 26 (MKSSPAELISEAKSSTQNSKMKRAVS) the chain is on the cytoplasmic side. A helical transmembrane segment spans residues 27 to 47 (VLDFILRLIAVVATLASAIAM). Residues 48–74 (GTTDESLPFFTQFIRFRAEYDDLPTLR) lie on the Extracellular side of the membrane. Residues 75–95 (LFVVASAFASGYLILSLPLSI) form a helical membrane-spanning segment. Topologically, residues 96 to 107 (LHITRSSARRTR) are cytoplasmic. The chain crosses the membrane as a helical span at residues 108 to 128 (VILIILDMVMLTSLTAASSAA). The Extracellular portion of the chain corresponds to 129–161 (AAIVYLAHKGNAKANWFAFCQQYDSFCERISGS). The chain crosses the membrane as a helical span at residues 162–182 (LIGSFIAIPLFIMLILFSALV). Over 183–186 (LSKR) the chain is Cytoplasmic.

It belongs to the Casparian strip membrane proteins (CASP) family. Homodimer and heterodimers.

It localises to the cell membrane. Its function is as follows. Regulates membrane-cell wall junctions and localized cell wall deposition. Required for establishment of the Casparian strip membrane domain (CSD) and the subsequent formation of Casparian strips, a cell wall modification of the root endodermis that determines an apoplastic barrier between the intraorganismal apoplasm and the extraorganismal apoplasm and prevents lateral diffusion. In Lotus japonicus (Lotus corniculatus var. japonicus), this protein is Casparian strip membrane protein 1.